Reading from the N-terminus, the 53-residue chain is Kunitz-type trypsin inhibitor alpha chain (53 aa).

Residues 33-53 (GWGLPRRTGDESCPLNVKAVR) form a disordered region.

The protein belongs to the protease inhibitor I3 (leguminous Kunitz-type inhibitor) family. As to quaternary structure, heterodimer of an alpha and a beta chain linked by a disulfide bond.

Functionally, inhibits trypsin with a Ki of 0.25 uM. Inhibits the trypsin-like proteases in midguts of larval H.armigera, S.exigua, and P.rapae. In Albizia kalkora (Kalkora mimosa), this protein is Kunitz-type trypsin inhibitor alpha chain.